Reading from the N-terminus, the 437-residue chain is Ribosomal protein uS12 methylthiotransferase RimO (437 aa).

The region spanning 4–114 is the MTTase N-terminal domain; it reads PRVSFVSLGC…VMNAVHEVAP (111 aa). Residues Cys13, Cys49, Cys78, Cys145, Cys149, and Cys152 each contribute to the [4Fe-4S] cluster site. Positions 131–369 constitute a Radical SAM core domain; sequence LTPRHYAYLK…MAKQQQISTN (239 aa). Residues 372–437 form the TRAM domain; sequence KKKVGKRLPV…DAYDLHGTAV (66 aa).

Belongs to the methylthiotransferase family. RimO subfamily. It depends on [4Fe-4S] cluster as a cofactor.

It localises to the cytoplasm. The catalysed reaction is L-aspartate(89)-[ribosomal protein uS12]-hydrogen + (sulfur carrier)-SH + AH2 + 2 S-adenosyl-L-methionine = 3-methylsulfanyl-L-aspartate(89)-[ribosomal protein uS12]-hydrogen + (sulfur carrier)-H + 5'-deoxyadenosine + L-methionine + A + S-adenosyl-L-homocysteine + 2 H(+). Its function is as follows. Catalyzes the methylthiolation of an aspartic acid residue of ribosomal protein uS12. This is Ribosomal protein uS12 methylthiotransferase RimO from Brucella abortus (strain S19).